The primary structure comprises 218 residues: Protein-L-isoaspartate O-methyltransferase (218 aa).

Residue Ser-69 is part of the active site.

The protein belongs to the methyltransferase superfamily. L-isoaspartyl/D-aspartyl protein methyltransferase family.

The protein resides in the cytoplasm. It carries out the reaction [protein]-L-isoaspartate + S-adenosyl-L-methionine = [protein]-L-isoaspartate alpha-methyl ester + S-adenosyl-L-homocysteine. In terms of biological role, catalyzes the methyl esterification of L-isoaspartyl residues in peptides and proteins that result from spontaneous decomposition of normal L-aspartyl and L-asparaginyl residues. It plays a role in the repair and/or degradation of damaged proteins. This is Protein-L-isoaspartate O-methyltransferase from Aromatoleum aromaticum (strain DSM 19018 / LMG 30748 / EbN1) (Azoarcus sp. (strain EbN1)).